Consider the following 321-residue polypeptide: MNAQLDNQGRLRHFLTTEGLPRPLLNQILDTAESFTGVIGKSVKKVPLLRGRTVINLFFEPSTRTRTTFELAATRLSADVLNIDVAVSSQSKGESLLDMLRNLEAMQCDAFVVRHGDSGTAEFIARHVRPGVSVLNAGDGRHAHPTQAMLDMFTIRQHKGDFEPLRVAIVGDILHSRVARSQIHALNGLGAGEVRVIAPRTLLPRDVETLGVRVFHDMQAGLRDVDVVMMLRLQRERMRGALLPSEGEYFKLYGLTEEKLSVAHPDAIIMHPGPINRGVEMNSAVADGPRSVILQQVTNGIAVRMALMSMLLGRAGGGEDA.

2 residues coordinate carbamoyl phosphate: R64 and T65. K92 contributes to the L-aspartate binding site. Residues R114, H144, and Q147 each coordinate carbamoyl phosphate. R177 and R232 together coordinate L-aspartate. The carbamoyl phosphate site is built by G273 and P274.

It belongs to the aspartate/ornithine carbamoyltransferase superfamily. ATCase family. Heterododecamer (2C3:3R2) of six catalytic PyrB chains organized as two trimers (C3), and six regulatory PyrI chains organized as three dimers (R2).

It carries out the reaction carbamoyl phosphate + L-aspartate = N-carbamoyl-L-aspartate + phosphate + H(+). The protein operates within pyrimidine metabolism; UMP biosynthesis via de novo pathway; (S)-dihydroorotate from bicarbonate: step 2/3. Catalyzes the condensation of carbamoyl phosphate and aspartate to form carbamoyl aspartate and inorganic phosphate, the committed step in the de novo pyrimidine nucleotide biosynthesis pathway. The polypeptide is Aspartate carbamoyltransferase catalytic subunit (Alkalilimnicola ehrlichii (strain ATCC BAA-1101 / DSM 17681 / MLHE-1)).